Reading from the N-terminus, the 342-residue chain is Endolytic peptidoglycan transglycosylase RlpA (342 aa).

The N-terminal stretch at 1–26 (MSKRVRSSLILPAVCGLGLAAVLLSS) is a signal peptide. Residue C27 is the site of N-palmitoyl cysteine attachment. The S-diacylglycerol cysteine moiety is linked to residue C27. In terms of domain architecture, SPOR spans 261 to 342 (SLPADGLYLQ…LGQPTLVRPD (82 aa)).

This sequence belongs to the RlpA family.

Its subcellular location is the cell membrane. Lytic transglycosylase with a strong preference for naked glycan strands that lack stem peptides. The polypeptide is Endolytic peptidoglycan transglycosylase RlpA (Pseudomonas aeruginosa (strain ATCC 15692 / DSM 22644 / CIP 104116 / JCM 14847 / LMG 12228 / 1C / PRS 101 / PAO1)).